The following is a 363-amino-acid chain: MSSDLKQTPLYQNYVDRGAKIVEFGGWAMPVQFSSIKEEHNAARYEIGLFDVSHMGEIEVTGKDASQFVQYLLSNDTDNLTTSKALYTALCNEEGGVIDDLVIYKLADDNYLLVVNAANTEKDFNWILKHKEKFDVEVQNVSNQYGQLAIQGPKARDLINQLVDEDVTEMKMFEFKQGVKLFAANVILSQSGYTGEDGFEIYCNIDDTEKIWDGLLEYNVMPCGLGARDTLRLEAGLPLHGQDLTESITPYEGGIAFASKPLIDADFIGKSVLKDQKENGAPRRTVGLELLEKGIARTGYEVMDLDGNIIGEVTSGTQSPSSGKSIALAMIKRDEFEMGRELLVQVRKRQLKAKIVKKNQIDK.

The protein belongs to the GcvT family. The glycine cleavage system is composed of four proteins: P, T, L and H.

The enzyme catalyses N(6)-[(R)-S(8)-aminomethyldihydrolipoyl]-L-lysyl-[protein] + (6S)-5,6,7,8-tetrahydrofolate = N(6)-[(R)-dihydrolipoyl]-L-lysyl-[protein] + (6R)-5,10-methylene-5,6,7,8-tetrahydrofolate + NH4(+). Functionally, the glycine cleavage system catalyzes the degradation of glycine. This Staphylococcus aureus (strain bovine RF122 / ET3-1) protein is Aminomethyltransferase.